We begin with the raw amino-acid sequence, 454 residues long: Sensor histidine kinase YkoH (454 aa).

At 1 to 12 (MKLKTKIHLYTS) the chain is on the cytoplasmic side. Residues 13-33 (ISLLILLILVHTAVYLIFSSA) form a helical membrane-spanning segment. Residues 34 to 153 (LTSKDAARLA…NTEESLFLLK (120 aa)) lie on the Extracellular side of the membrane. The chain crosses the membrane as a helical span at residues 154–174 (IILIAASAAVCIASFFAGSLL). Residues 175–454 (ARRIINPIRR…QFSEQNGGGR (280 aa)) are Cytoplasmic-facing. The region spanning 176–230 (RRIINPIRRLMITMKDIQRDKEFKTISLEGQSNDELYQMGLTFNEMAMMLKEHYD) is the HAMP domain. The Histidine kinase domain occupies 238–450 (DASHELKTPL…AVTMQFSEQN (213 aa)). At His241 the chain carries Phosphohistidine; by autocatalysis.

It localises to the cell membrane. The catalysed reaction is ATP + protein L-histidine = ADP + protein N-phospho-L-histidine.. Its function is as follows. Probable member of the two-component regulatory system YkoH/YkoG. Potentially phosphorylates YkoG. The polypeptide is Sensor histidine kinase YkoH (ykoH) (Bacillus subtilis (strain 168)).